The primary structure comprises 388 residues: D-alanyl-D-alanine carboxypeptidase DacD (388 aa).

Positions 1–21 are cleaved as a signal peptide; sequence MKRRLIIAASLFVFNLSSGFA. The active-site Acyl-ester intermediate is S63. K66 acts as the Proton acceptor in catalysis. The active site involves S129. K232 serves as a coordination point for substrate.

Belongs to the peptidase S11 family.

It localises to the cell inner membrane. The catalysed reaction is Preferential cleavage: (Ac)2-L-Lys-D-Ala-|-D-Ala. Also transpeptidation of peptidyl-alanyl moieties that are N-acyl substituents of D-alanine.. The protein operates within cell wall biogenesis; peptidoglycan biosynthesis. Functionally, removes C-terminal D-alanyl residues from sugar-peptide cell wall precursors. The chain is D-alanyl-D-alanine carboxypeptidase DacD (dacD) from Escherichia coli (strain K12).